Reading from the N-terminus, the 1342-residue chain is DNA-directed RNA polymerase subunit beta (1342 aa).

The protein belongs to the RNA polymerase beta chain family. In terms of assembly, the RNAP catalytic core consists of 2 alpha, 1 beta, 1 beta' and 1 omega subunit. When a sigma factor is associated with the core the holoenzyme is formed, which can initiate transcription.

The enzyme catalyses RNA(n) + a ribonucleoside 5'-triphosphate = RNA(n+1) + diphosphate. Its function is as follows. DNA-dependent RNA polymerase catalyzes the transcription of DNA into RNA using the four ribonucleoside triphosphates as substrates. This chain is DNA-directed RNA polymerase subunit beta, found in Cronobacter sakazakii (strain ATCC BAA-894) (Enterobacter sakazakii).